The sequence spans 75 residues: CDC42 small effector protein 2-B (75 aa).

Residues Cys10 and Cys11 are each lipidated (S-palmitoyl cysteine). In terms of domain architecture, CRIB spans 29–42 (IGEPMNFVHTAHVG).

It belongs to the CDC42SE/SPEC family.

The protein resides in the cytoplasm. Its subcellular location is the cytoskeleton. It is found in the cell membrane. Functionally, probably involved in the organization of the actin cytoskeleton by acting downstream of CDC42, inducing actin filament assembly. This is CDC42 small effector protein 2-B (cdc42se2-b) from Xenopus laevis (African clawed frog).